Reading from the N-terminus, the 277-residue chain is Orotidine 5'-phosphate decarboxylase (277 aa).

Substrate is bound by residues Asp-40, 62 to 64 (KTH), 93 to 102 (DRKFIDIGNT), Tyr-229, and Arg-247. The active-site Proton donor is the Lys-95.

Belongs to the OMP decarboxylase family.

It catalyses the reaction orotidine 5'-phosphate + H(+) = UMP + CO2. It participates in pyrimidine metabolism; UMP biosynthesis via de novo pathway; UMP from orotate: step 2/2. In Aspergillus kawachii (White koji mold), this protein is Orotidine 5'-phosphate decarboxylase (pyrG).